A 247-amino-acid polypeptide reads, in one-letter code: Coproheme decarboxylase (247 aa).

Fe-coproporphyrin III is bound by residues R129, 143 to 147 (YPMDK), H170, Q183, and S221. Residue Y143 is part of the active site.

Belongs to the ChdC family. Type 1 subfamily. Fe-coproporphyrin III serves as cofactor.

The catalysed reaction is Fe-coproporphyrin III + 2 H2O2 + 2 H(+) = heme b + 2 CO2 + 4 H2O. The enzyme catalyses Fe-coproporphyrin III + H2O2 + H(+) = harderoheme III + CO2 + 2 H2O. It catalyses the reaction harderoheme III + H2O2 + H(+) = heme b + CO2 + 2 H2O. It participates in porphyrin-containing compound metabolism; protoheme biosynthesis. Its function is as follows. Involved in coproporphyrin-dependent heme b biosynthesis. Catalyzes the decarboxylation of Fe-coproporphyrin III (coproheme) to heme b (protoheme IX), the last step of the pathway. The reaction occurs in a stepwise manner with a three-propionate intermediate. The sequence is that of Coproheme decarboxylase from Bacillus cytotoxicus (strain DSM 22905 / CIP 110041 / 391-98 / NVH 391-98).